The sequence spans 88 residues: Bombyxin B-8 (88 aa).

A signal peptide spans 1 to 18 (MKTSVIFVLIVLNLMWSG). 3 disulfide bridges follow: C28–C74, C40–C87, and C73–C78. Positions 47–65 (GGAQYAPYFWQKAYLGSRG) are cleaved as a propeptide — c peptide like.

It belongs to the insulin family. Heterodimer of a B chain and an A chain linked by two disulfide bonds.

The protein localises to the secreted. Functionally, brain peptide responsible for activation of prothoracic glands to produce ecdysone in insects. The sequence is that of Bombyxin B-8 (BBXB8) from Bombyx mori (Silk moth).